The primary structure comprises 321 residues: 37 kDa cell surface protein (321 aa).

The protein resides in the secreted. It is found in the cell wall. This Candida albicans (Yeast) protein is 37 kDa cell surface protein (CSP37).